Reading from the N-terminus, the 185-residue chain is Elongation factor P (185 aa).

This sequence belongs to the elongation factor P family.

It localises to the cytoplasm. Its pathway is protein biosynthesis; polypeptide chain elongation. Its function is as follows. Involved in peptide bond synthesis. Stimulates efficient translation and peptide-bond synthesis on native or reconstituted 70S ribosomes in vitro. Probably functions indirectly by altering the affinity of the ribosome for aminoacyl-tRNA, thus increasing their reactivity as acceptors for peptidyl transferase. This Tropheryma whipplei (strain TW08/27) (Whipple's bacillus) protein is Elongation factor P.